Here is a 132-residue protein sequence, read N- to C-terminus: Large-conductance mechanosensitive channel (132 aa).

2 consecutive transmembrane segments (helical) span residues 14–34 (VIDLAVGVVIGAAFGKIVSSL) and 67–87 (GNFIQTIFDFLIIAAAIFMFV).

It belongs to the MscL family. As to quaternary structure, homopentamer.

Its subcellular location is the cell membrane. Functionally, channel that opens in response to stretch forces in the membrane lipid bilayer. May participate in the regulation of osmotic pressure changes within the cell. The chain is Large-conductance mechanosensitive channel from Bacillus anthracis (strain A0248).